The chain runs to 71 residues: DNA-directed RNA polymerase subunit Rpo10 (71 aa).

Positions 6, 9, 52, and 53 each coordinate Zn(2+).

Belongs to the archaeal Rpo10/eukaryotic RPB10 RNA polymerase subunit family. In terms of assembly, part of the RNA polymerase complex. Zn(2+) serves as cofactor.

The protein resides in the cytoplasm. The catalysed reaction is RNA(n) + a ribonucleoside 5'-triphosphate = RNA(n+1) + diphosphate. In terms of biological role, DNA-dependent RNA polymerase (RNAP) catalyzes the transcription of DNA into RNA using the four ribonucleoside triphosphates as substrates. This Methanocella arvoryzae (strain DSM 22066 / NBRC 105507 / MRE50) protein is DNA-directed RNA polymerase subunit Rpo10.